We begin with the raw amino-acid sequence, 1314 residues long: Ubinuclein-2 (1314 aa).

The interval 1–113 (MAEPRRVAFI…PPPRPPKETV (113 aa)) is disordered. S13 bears the Phosphoserine mark. Composition is skewed to basic and acidic residues over residues 16-31 (RRRE…EPPR) and 55-67 (ARDK…EVSR). Over residues 81–96 (PEPPPPPLPLQTPPPR) the composition is skewed to pro residues. T229 is modified (phosphothreonine). Position 236 is a phosphoserine (S236). The interval 236 to 288 (SDTEEDDFTDNQKHKPPKVPKIKEDDIEVKKRKRKEEGEKEKKPRKKVPKQLG) is disordered. At T238 the chain carries Phosphothreonine. K258 is covalently cross-linked (Glycyl lysine isopeptide (Lys-Gly) (interchain with G-Cter in SUMO2)). Position 297 is a phosphoserine (S297). 9 disordered regions span residues 322–345 (DALK…PKPP), 400–424 (ATSD…TFPS), 559–584 (LQAD…RVIG), 657–709 (LTSA…ASAS), 785–818 (ATPK…DLAH), 849–893 (GLQR…SLTQ), 948–975 (YRLP…APST), 1003–1185 (ASPK…GSSV), and 1288–1314 (PLPA…RKPQ). The segment covering 330-341 (PKVPVTPSSSSL) has biased composition (low complexity). S402, S405, and S408 each carry phosphoserine. The segment covering 415 to 424 (GNTTHPTFPS) has biased composition (polar residues). 2 stretches are compositionally biased toward basic and acidic residues: residues 560 to 570 (QADEEREKNGS) and 673 to 684 (KVKECSPKKDPK). S570 bears the Phosphoserine mark. The segment covering 685–709 (APASVVASGGGPSTSSSTSIVASAS) has biased composition (low complexity). Over residues 792–801 (STQTAHSSSL) the composition is skewed to polar residues. The span at 849 to 879 (GLQRSSQIHASSSSQTHVSSSQAQAAASSHA) shows a compositional bias: low complexity. Polar residues predominate over residues 883–893 (SEAQDASSLTQ). A compositionally biased stretch (low complexity) spans 1003–1013 (ASPKLAASPKP). Over residues 1014-1028 (ATSPKPLPSPKPSVS) the composition is skewed to pro residues. Over residues 1029 to 1040 (PKPSLSAKPSIS) the composition is skewed to low complexity. The residue at position 1036 (K1036) is an N6-acetyllysine. Composition is skewed to polar residues over residues 1057 to 1132 (PSSS…NSLS) and 1142 to 1153 (RGSNLNSSGANR). S1091 is modified (phosphoserine). K1116 carries the post-translational modification N6-acetyllysine. Over residues 1305 to 1314 (GDTKLPRKPQ) the composition is skewed to basic and acidic residues.

This sequence belongs to the ubinuclein family.

This is Ubinuclein-2 (Ubn2) from Mus musculus (Mouse).